The chain runs to 1442 residues: ABC transporter G family member 11 (1442 aa).

Residues 125 to 373 form the ABC transporter 1 domain; the sequence is LFTPSFWTKK…FMSLGFDCEP (249 aa). In terms of domain architecture, ABC transmembrane type-2 1 spans 478-718; sequence LNDKFGMYSK…EQGSLYFKGD (241 aa). 6 consecutive transmembrane segments (helical) span residues 482-502, 518-538, 567-587, 592-612, 627-647, and 737-757; these read FGMYSKYLSVLIQGFVYASLF, AILSAVIFNAFLSIGEMAMTF, IPFTAIQVFLFSIIAYFMFGL, GKFFIFCFTLLGASLACTALF, NISNVFIIFMLTYSGYTIPIP, and IIVYCWWVFFVVCNMFAMEYI. The ABC transporter 2 domain maps to 808–1052; the sequence is FTWQNIRYTV…LTSYFERHGV (245 aa). 844-851 provides a ligand contact to ATP; that stretch reads GSSGAGKT. In terms of domain architecture, ABC transmembrane type-2 2 spans 1144–1369; the sequence is YYTYGSFVQA…YNTCQNYTSA (226 aa). Helical transmembrane passes span 1147-1167, 1181-1201, 1220-1240, 1259-1279, 1286-1306, and 1416-1436; these read YGSFVQAALCGLIIGFTFWNL, IFEALMLGILLIFVVMPQLII, FAISIVVVELPFIVISGTIFF, FYFWFIFIIFMFFCVSFGQAV, MFFAMTLIPLLIVFLFLFCGV, and VGIIIGFFVFNILMVILFVYL.

This sequence belongs to the ABC transporter superfamily. ABCG family. PDR (TC 3.A.1.205) subfamily.

The protein localises to the membrane. In Dictyostelium discoideum (Social amoeba), this protein is ABC transporter G family member 11 (abcG11).